Consider the following 588-residue polypeptide: L-fucose isomerase (588 aa).

Residues Glu-335 and Asp-359 each act as proton acceptor in the active site. The Mn(2+) site is built by Glu-335, Asp-359, and His-525.

It belongs to the L-fucose isomerase family. It depends on Mn(2+) as a cofactor.

The protein resides in the cytoplasm. It catalyses the reaction L-fucose = L-fuculose. It functions in the pathway carbohydrate degradation; L-fucose degradation; L-lactaldehyde and glycerone phosphate from L-fucose: step 1/3. Converts the aldose L-fucose into the corresponding ketose L-fuculose. The polypeptide is L-fucose isomerase (Streptococcus pneumoniae (strain Taiwan19F-14)).